The primary structure comprises 506 residues: Serine/threonine-protein kinase D6PKL1 (506 aa).

The disordered stretch occupies residues 1 to 96 (MASKYGSGVL…TCSSFSGNNK (96 aa)). The segment covering 12-23 (ENKKEKGDKETP) has biased composition (basic and acidic residues). Residues 24–54 (ETSYSSQSVSVNTLADQVSSTLSFAPSSDSK) are compositionally biased toward polar residues. Positions 55–67 (TGGEVKFNEKSDQ) are enriched in basic and acidic residues. The segment covering 77–92 (STSSDISDESTCSSFS) has biased composition (low complexity). Positions 123-456 (FRLLKRLGCG…ATEMKQHPFF (334 aa)) constitute a Protein kinase domain. ATP-binding positions include 129–137 (LGCGDIGTV) and Lys152. Asp248 serves as the catalytic Proton acceptor. Positions 475–495 (PVDYESAPATPAAATSTSVKS) are disordered. The segment covering 480–492 (SAPATPAAATSTS) has biased composition (low complexity).

This sequence belongs to the protein kinase superfamily. AGC Ser/Thr protein kinase family.

Its subcellular location is the cell membrane. It catalyses the reaction L-seryl-[protein] + ATP = O-phospho-L-seryl-[protein] + ADP + H(+). The catalysed reaction is L-threonyl-[protein] + ATP = O-phospho-L-threonyl-[protein] + ADP + H(+). Functionally, protein kinase that regulates the auxin transport activity of PIN auxin efflux facilitators by direct phosphorylation. D6PK-mediated PIN phosphorylation promotes auxin transport in the hypocotyl and this is a prerequisite for PHOT1-dependent hypocotyl bending. This is Serine/threonine-protein kinase D6PKL1 (D6PKL1) from Arabidopsis thaliana (Mouse-ear cress).